A 278-amino-acid chain; its full sequence is Ribosomal RNA small subunit methyltransferase A (278 aa).

Residues Asn25, Leu27, Gly52, Glu73, Asp97, and Asn117 each contribute to the S-adenosyl-L-methionine site.

Belongs to the class I-like SAM-binding methyltransferase superfamily. rRNA adenine N(6)-methyltransferase family. RsmA subfamily.

It is found in the cytoplasm. It catalyses the reaction adenosine(1518)/adenosine(1519) in 16S rRNA + 4 S-adenosyl-L-methionine = N(6)-dimethyladenosine(1518)/N(6)-dimethyladenosine(1519) in 16S rRNA + 4 S-adenosyl-L-homocysteine + 4 H(+). In terms of biological role, specifically dimethylates two adjacent adenosines (A1518 and A1519) in the loop of a conserved hairpin near the 3'-end of 16S rRNA in the 30S particle. May play a critical role in biogenesis of 30S subunits. The chain is Ribosomal RNA small subunit methyltransferase A from Desulfitobacterium hafniense (strain DSM 10664 / DCB-2).